Reading from the N-terminus, the 385-residue chain is Heterogeneous nuclear ribonucleoprotein 87F (385 aa).

RRM domains lie at 24–101 and 115–192; these read RKLF…RAVP and KKLF…KAIA. Disordered regions lie at residues 192-289 and 305-385; these read AKQD…WNGG and GNGG…NRRY. Gly residues-rich tracts occupy residues 199–289 and 305–317; these read QGGG…WNGG and GNGGGGGGGGGFG. The span at 319–336 shows a compositional bias: polar residues; sequence EYQQSYGGGPQRNSNFGN. Composition is skewed to gly residues over residues 344–362 and 369–385; these read QGGGGGGFNKGNQGGGQGF and TGGGGQGGNMGGGNRRY.

It localises to the nucleus. Its subcellular location is the cytoplasm. Its function is as follows. This protein is a component of ribonucleosomes. Could be needed to organize a concentration gradient of a dorsalizing morphogen (Dm) originating in the germinal vesicle. This Drosophila melanogaster (Fruit fly) protein is Heterogeneous nuclear ribonucleoprotein 87F (Hrb87F).